Consider the following 88-residue polypeptide: Metastasis-suppressor KiSS-1 (88 aa).

The segment covering 1–13 (SVENSRPTGQQLE) has biased composition (polar residues). The interval 1–88 (SVENSRPTGQ…REKDLPNYNW (88 aa)) is disordered. A compositionally biased stretch (low complexity) spans 33–55 (SATARLSRRGASLSSPAESSGSP). Over residues 78–88 (QREKDLPNYNW) the composition is skewed to basic and acidic residues. Y86 is modified (phosphotyrosine).

It belongs to the KISS1 family. As to expression, in the hypothalamus, expression increases with puberty in both male and female monkeys. Robust expression in the region of the arcuate nucleus (ARC).

The protein resides in the secreted. Its function is as follows. Metastasis suppressor protein. May regulate events downstream of cell-matrix adhesion, perhaps involving cytoskeletal reorganization. Generates a C-terminally amidated peptide, metastin which functions as the endogenous ligand of the G-protein coupled receptor GPR54. The receptor is essential for normal gonadotropin-released hormone physiology and for puberty. The hypothalamic KiSS1/GPR54 system is a pivotal factor in central regulation of the gonadotropic axis at puberty and in adulthood. The polypeptide is Metastasis-suppressor KiSS-1 (KISS1) (Macaca mulatta (Rhesus macaque)).